A 228-amino-acid chain; its full sequence is Derlin-3 (228 aa).

The Cytoplasmic portion of the chain corresponds to 1–22 (MAGQRLAAGFLQVPAVTRAYTA). The chain crosses the membrane as a helical span at residues 23–43 (ACVLTTAAVQLELLSPFQLYF). The Lumenal segment spans residues 44 to 57 (NPHLVFRKFQVWRL). The helical transmembrane segment at 58–78 (ITTFLFFGPLGFGFFFNMLFV) threads the bilayer. Residues 79-98 (FRYCRMLEEGSFRGRKADFV) are Cytoplasmic-facing. A helical transmembrane segment spans residues 99–119 (FMFLFGGVLMTLLGFLGSLFF). Over 120 to 168 (LGQALMAMLVYVWSRRSPHVRVNFFGLLNFQAPFLPWALMGFSLLLGNS) the chain is Lumenal. The helical transmembrane segment at 169–189 (VVTDLLGILVGHIYYFLEDVF) threads the bilayer. Over 190-228 (PNQPGGKRLLLTPSVLKLLLDDPQEDPDYLPLPEEQPEL) the chain is Cytoplasmic.

It belongs to the derlin family. As to quaternary structure, forms homo- and heterooligomers with DERL2 and, to a lesser extent, with DERL1. Interacts with VCP and EDEM1. Interacts with SELENOK and SELENOS. Interacts with the signal recognition particle/SRP and the SRP receptor; in the process of endoplasmic reticulum stress-induced pre-emptive quality control. In terms of tissue distribution, highly expressed in spleen, lung, liver, spleen and testis. Expressed at intermediate level in kidney. Weakly or not expressed in brain, heart and skeletal muscle.

It is found in the endoplasmic reticulum membrane. Functional component of endoplasmic reticulum-associated degradation (ERAD) for misfolded lumenal glycoproteins, but not that of misfolded nonglycoproteins. May act by forming a channel that allows the retrotranslocation of misfolded glycoproteins into the cytosol where they are ubiquitinated and degraded by the proteasome. May mediate the interaction between VCP and the misfolded glycoproteins. May be involved in endoplasmic reticulum stress-induced pre-emptive quality control, a mechanism that selectively attenuates the translocation of newly synthesized proteins into the endoplasmic reticulum and reroutes them to the cytosol for proteasomal degradation. The protein is Derlin-3 of Mus musculus (Mouse).